The chain runs to 395 residues: Acetate kinase 1 (395 aa).

Residue asparagine 8 coordinates Mg(2+). Lysine 15 is an ATP binding site. Arginine 89 contacts substrate. Catalysis depends on aspartate 146, which acts as the Proton donor/acceptor. Residues 206-210 (HIGNG), 283-285 (DMR), and 330-334 (GIGEN) contribute to the ATP site. Glutamate 382 serves as a coordination point for Mg(2+).

The protein belongs to the acetokinase family. Homodimer. Mg(2+) serves as cofactor. It depends on Mn(2+) as a cofactor.

It is found in the cytoplasm. It catalyses the reaction acetate + ATP = acetyl phosphate + ADP. Its pathway is metabolic intermediate biosynthesis; acetyl-CoA biosynthesis; acetyl-CoA from acetate: step 1/2. Functionally, catalyzes the formation of acetyl phosphate from acetate and ATP. Can also catalyze the reverse reaction. In Lactococcus lactis subsp. lactis (strain IL1403) (Streptococcus lactis), this protein is Acetate kinase 1.